Consider the following 122-residue polypeptide: Large ribosomal subunit protein bL12 (122 aa).

The protein belongs to the bacterial ribosomal protein bL12 family. In terms of assembly, homodimer. Part of the ribosomal stalk of the 50S ribosomal subunit. Forms a multimeric L10(L12)X complex, where L10 forms an elongated spine to which 2 to 4 L12 dimers bind in a sequential fashion. Binds GTP-bound translation factors.

Forms part of the ribosomal stalk which helps the ribosome interact with GTP-bound translation factors. Is thus essential for accurate translation. The protein is Large ribosomal subunit protein bL12 of Mycoplasma mycoides subsp. mycoides SC (strain CCUG 32753 / NCTC 10114 / PG1).